The following is a 361-amino-acid chain: Cdc42 effector protein 1 (361 aa).

Residues 1–29 (MPGPQGAGGAPAMNLGKLSPVGWVSSSQG) form a disordered region. 2 positions are modified to phosphoserine: serine 19 and serine 27. The residue at position 34 (threonine 34) is a Phosphothreonine. Residues 38 to 52 (ISPPLGDFRHTMHVG) form the CRIB domain. The residue at position 39 (serine 39) is a Phosphoserine. Arginine 53 is modified (omega-N-methylarginine). Phosphoserine occurs at positions 65, 73, 77, 101, 113, 121, 139, 180, 190, 192, and 195. Residues 161-186 (CTISRLPRPEKPRDRDRDSSFPAEPE) form a disordered region. Basic and acidic residues predominate over residues 167-186 (PRPEKPRDRDRDSSFPAEPE). 2 disordered regions span residues 218 to 300 (EGSA…SRHH) and 320 to 361 (SWGS…EVKV). A run of 4 repeats spans residues 220–226 (SAAETPA), 229–235 (PAASPPA), 236–242 (SVANPPA), and 243–249 (PASSPSL). The segment at 220 to 249 (SAAETPAPAPAASPPASVANPPAPASSPSL) is 4 X 7 AA tandem repeats of [PT]-[AT]-A-[ENT]-[PT]-[PTS]-[AG]. Residues serine 270, serine 320, and serine 323 each carry the phosphoserine modification. Residues 332-347 (QAGSRTPVPSTVQANT) show a composition bias toward polar residues. Residues 351–361 (ADAEEDDEVKV) are compositionally biased toward acidic residues.

The protein belongs to the BORG/CEP family. Interacts with RHOQ and CDC42, in a GTP-dependent manner.

Its subcellular location is the endomembrane system. It is found in the cytoplasm. It localises to the cytoskeleton. In terms of biological role, probably involved in the organization of the actin cytoskeleton. Induced membrane extensions in fibroblasts. The polypeptide is Cdc42 effector protein 1 (Bos taurus (Bovine)).